Here is a 271-residue protein sequence, read N- to C-terminus: NADPH-dependent 7-cyano-7-deazaguanine reductase (271 aa).

79–81 is a binding site for substrate; the sequence is IES. 81 to 82 contributes to the NADPH binding site; that stretch reads SK. Catalysis depends on Cys-178, which acts as the Thioimide intermediate. Asp-185 acts as the Proton donor in catalysis. A substrate-binding site is contributed by 217 to 218; sequence HE. Residue 246 to 247 participates in NADPH binding; it reads RG.

It belongs to the GTP cyclohydrolase I family. QueF type 2 subfamily. In terms of assembly, homodimer.

Its subcellular location is the cytoplasm. It catalyses the reaction 7-aminomethyl-7-carbaguanine + 2 NADP(+) = 7-cyano-7-deazaguanine + 2 NADPH + 3 H(+). Its pathway is tRNA modification; tRNA-queuosine biosynthesis. In terms of biological role, catalyzes the NADPH-dependent reduction of 7-cyano-7-deazaguanine (preQ0) to 7-aminomethyl-7-deazaguanine (preQ1). This is NADPH-dependent 7-cyano-7-deazaguanine reductase from Acinetobacter baylyi (strain ATCC 33305 / BD413 / ADP1).